We begin with the raw amino-acid sequence, 449 residues long: Bifunctional protein GlmU (449 aa).

Residues 1 to 229 are pyrophosphorylase; the sequence is MKLSAVILAA…EEDIYGINDR (229 aa). UDP-N-acetyl-alpha-D-glucosamine is bound by residues 8-11, Lys22, Gln73, and 78-79; these read LAAG and GT. Asp102 is a binding site for Mg(2+). UDP-N-acetyl-alpha-D-glucosamine is bound by residues Gly139, Glu154, Asn169, and Asn227. Asn227 serves as a coordination point for Mg(2+). The segment at 230-250 is linker; it reads VQLAQAENILRQRKNRELMLS. The tract at residues 251 to 449 is N-acetyltransferase; sequence GVSLMDPAST…AGQKHLPRKG (199 aa). Residues Arg332 and Lys350 each coordinate UDP-N-acetyl-alpha-D-glucosamine. Catalysis depends on His362, which acts as the Proton acceptor. UDP-N-acetyl-alpha-D-glucosamine-binding residues include Tyr365 and Asn376. Acetyl-CoA-binding positions include Ala379, 385 to 386, Ser404, Ala422, and Arg439; that span reads NY.

It in the N-terminal section; belongs to the N-acetylglucosamine-1-phosphate uridyltransferase family. The protein in the C-terminal section; belongs to the transferase hexapeptide repeat family. In terms of assembly, homotrimer. Mg(2+) serves as cofactor.

It is found in the cytoplasm. The catalysed reaction is alpha-D-glucosamine 1-phosphate + acetyl-CoA = N-acetyl-alpha-D-glucosamine 1-phosphate + CoA + H(+). It carries out the reaction N-acetyl-alpha-D-glucosamine 1-phosphate + UTP + H(+) = UDP-N-acetyl-alpha-D-glucosamine + diphosphate. It participates in nucleotide-sugar biosynthesis; UDP-N-acetyl-alpha-D-glucosamine biosynthesis; N-acetyl-alpha-D-glucosamine 1-phosphate from alpha-D-glucosamine 6-phosphate (route II): step 2/2. It functions in the pathway nucleotide-sugar biosynthesis; UDP-N-acetyl-alpha-D-glucosamine biosynthesis; UDP-N-acetyl-alpha-D-glucosamine from N-acetyl-alpha-D-glucosamine 1-phosphate: step 1/1. The protein operates within bacterial outer membrane biogenesis; LPS lipid A biosynthesis. Catalyzes the last two sequential reactions in the de novo biosynthetic pathway for UDP-N-acetylglucosamine (UDP-GlcNAc). The C-terminal domain catalyzes the transfer of acetyl group from acetyl coenzyme A to glucosamine-1-phosphate (GlcN-1-P) to produce N-acetylglucosamine-1-phosphate (GlcNAc-1-P), which is converted into UDP-GlcNAc by the transfer of uridine 5-monophosphate (from uridine 5-triphosphate), a reaction catalyzed by the N-terminal domain. This chain is Bifunctional protein GlmU, found in Syntrophomonas wolfei subsp. wolfei (strain DSM 2245B / Goettingen).